A 461-amino-acid chain; its full sequence is Cysteine--tRNA ligase (461 aa).

C30 is a binding site for Zn(2+). The short motif at 32-42 (VTVYDLCHIGH) is the 'HIGH' region element. Zn(2+)-binding residues include C211, H236, and E240. The 'KMSKS' region signature appears at 268-272 (KMSKS). Residue K271 coordinates ATP.

It belongs to the class-I aminoacyl-tRNA synthetase family. Monomer. Zn(2+) is required as a cofactor.

The protein localises to the cytoplasm. It carries out the reaction tRNA(Cys) + L-cysteine + ATP = L-cysteinyl-tRNA(Cys) + AMP + diphosphate. This Shewanella sp. (strain ANA-3) protein is Cysteine--tRNA ligase.